The following is a 311-amino-acid chain: Bifunctional protein FolD (311 aa).

NADP(+)-binding positions include 180–182 (GRS), S209, and I250.

Belongs to the tetrahydrofolate dehydrogenase/cyclohydrolase family. In terms of assembly, homodimer.

It carries out the reaction (6R)-5,10-methylene-5,6,7,8-tetrahydrofolate + NADP(+) = (6R)-5,10-methenyltetrahydrofolate + NADPH. The enzyme catalyses (6R)-5,10-methenyltetrahydrofolate + H2O = (6R)-10-formyltetrahydrofolate + H(+). It functions in the pathway one-carbon metabolism; tetrahydrofolate interconversion. Catalyzes the oxidation of 5,10-methylenetetrahydrofolate to 5,10-methenyltetrahydrofolate and then the hydrolysis of 5,10-methenyltetrahydrofolate to 10-formyltetrahydrofolate. The protein is Bifunctional protein FolD of Haloquadratum walsbyi (strain DSM 16790 / HBSQ001).